Reading from the N-terminus, the 206-residue chain is LexA repressor (206 aa).

A DNA-binding region (H-T-H motif) is located at residues 28–48 (VREIGEAVGLASSSTVHGHLA). Catalysis depends on for autocatalytic cleavage activity residues Ser128 and Lys166.

The protein belongs to the peptidase S24 family. In terms of assembly, homodimer.

It carries out the reaction Hydrolysis of Ala-|-Gly bond in repressor LexA.. Functionally, represses a number of genes involved in the response to DNA damage (SOS response), including recA and lexA. In the presence of single-stranded DNA, RecA interacts with LexA causing an autocatalytic cleavage which disrupts the DNA-binding part of LexA, leading to derepression of the SOS regulon and eventually DNA repair. This Bacillus velezensis (strain DSM 23117 / BGSC 10A6 / LMG 26770 / FZB42) (Bacillus amyloliquefaciens subsp. plantarum) protein is LexA repressor.